The sequence spans 451 residues: Adenylyltransferase and sulfurtransferase MOCS3-1 (451 aa).

The disordered stretch occupies residues 42–62 (GEDSDEAEESSNDMPTPQTKL). A compositionally biased stretch (acidic residues) spans 43-52 (EDSDEAEESS). Position 60 is a phosphothreonine (T60). ATP is bound by residues G99, D120, 127-131 (SNLHR), K144, and 188-189 (DN). Residues C229 and C232 each coordinate Zn(2+). C246 acts as the Glycyl thioester intermediate; for adenylyltransferase activity in catalysis. Zn(2+) is bound by residues C304 and C307. The 97-residue stretch at 353–449 (QSQPHLLLDV…WTGSVDATFP (97 aa)) folds into the Rhodanese domain. Catalysis depends on C408, which acts as the Cysteine persulfide intermediate; for sulfurtransferase activity.

It in the N-terminal section; belongs to the HesA/MoeB/ThiF family. UBA4 subfamily. The cofactor is Zn(2+).

The protein resides in the cytoplasm. The catalysed reaction is [molybdopterin-synthase sulfur-carrier protein]-C-terminal Gly-Gly + ATP + H(+) = [molybdopterin-synthase sulfur-carrier protein]-C-terminal Gly-Gly-AMP + diphosphate. It carries out the reaction [molybdopterin-synthase sulfur-carrier protein]-C-terminal Gly-Gly-AMP + S-sulfanyl-L-cysteinyl-[cysteine desulfurase] + AH2 = [molybdopterin-synthase sulfur-carrier protein]-C-terminal-Gly-aminoethanethioate + L-cysteinyl-[cysteine desulfurase] + A + AMP + 2 H(+). The protein operates within tRNA modification; 5-methoxycarbonylmethyl-2-thiouridine-tRNA biosynthesis. It participates in cofactor biosynthesis; molybdopterin biosynthesis. In terms of biological role, plays a central role in 2-thiolation of mcm(5)S(2)U at tRNA wobble positions of cytosolic tRNA(Lys), tRNA(Glu) and tRNA(Gln). Also essential during biosynthesis of the molybdenum cofactor. Acts by mediating the C-terminal thiocarboxylation of sulfur carriers URM1 and MOCS2A. Its N-terminus first activates URM1 and MOCS2A as acyl-adenylates (-COAMP), then the persulfide sulfur on the catalytic cysteine is transferred to URM1 and MOCS2A to form thiocarboxylation (-COSH) of their C-terminus. The reaction probably involves hydrogen sulfide that is generated from the persulfide intermediate and that acts as a nucleophile towards URM1 and MOCS2A. Subsequently, a transient disulfide bond is formed. Does not use thiosulfate as sulfur donor; NFS1 probably acting as a sulfur donor for thiocarboxylation reactions. The chain is Adenylyltransferase and sulfurtransferase MOCS3-1 from Drosophila pseudoobscura pseudoobscura (Fruit fly).